A 711-amino-acid chain; its full sequence is Probable cadmium-transporting ATPase (711 aa).

Residues 3 to 66 (EKTVYRVDGL…AGAFEHLKII (64 aa)) enclose the HMA domain. The Cd(2+) site is built by Cys-14 and Cys-17. The next 5 helical transmembrane spans lie at 89–109 (WRLL…IMNG), 111–131 (DFYL…YSLF), 151–171 (IAII…VVIL), 317–337 (TPAI…LFGG), and 347–367 (LSVL…VAIV). Asp-398 acts as the 4-aspartylphosphate intermediate in catalysis. Residues 669–689 (VIKLIALLLVIPGWLTLWIAI) form a helical membrane-spanning segment.

Belongs to the cation transport ATPase (P-type) (TC 3.A.3) family. Type IB subfamily.

The protein localises to the cell membrane. It catalyses the reaction Cd(2+)(in) + ATP + H2O = Cd(2+)(out) + ADP + phosphate + H(+). In terms of biological role, couples the hydrolysis of ATP with the export of cadmium. This chain is Probable cadmium-transporting ATPase (cadA), found in Listeria monocytogenes.